The chain runs to 475 residues: Arginine biosynthesis bifunctional protein ArgJ 1, mitochondrial (475 aa).

Residues Thr-204, Lys-233, Thr-244, Glu-331, Asn-470, and Thr-475 each coordinate substrate. The Nucleophile role is filled by Thr-244.

The protein belongs to the ArgJ family. In terms of assembly, heterodimer of an alpha and a beta chain. The alpha and beta chains are autoproteolytically processed from a single precursor protein within the mitochondrion.

The protein resides in the mitochondrion matrix. It carries out the reaction N(2)-acetyl-L-ornithine + L-glutamate = N-acetyl-L-glutamate + L-ornithine. The catalysed reaction is L-glutamate + acetyl-CoA = N-acetyl-L-glutamate + CoA + H(+). Its pathway is amino-acid biosynthesis; L-arginine biosynthesis; L-ornithine and N-acetyl-L-glutamate from L-glutamate and N(2)-acetyl-L-ornithine (cyclic): step 1/1. It participates in amino-acid biosynthesis; L-arginine biosynthesis; N(2)-acetyl-L-ornithine from L-glutamate: step 1/4. Its function is as follows. Catalyzes two activities which are involved in the cyclic version of arginine biosynthesis: the synthesis of acetylglutamate from glutamate and acetyl-CoA, and of ornithine by transacetylation between acetylornithine and glutamate. This is Arginine biosynthesis bifunctional protein ArgJ 1, mitochondrial from Botryotinia fuckeliana (strain B05.10) (Noble rot fungus).